The following is a 431-amino-acid chain: Magnetosome protein MamH (431 aa).

The next 11 helical transmembrane spans lie at 21-41 (LLSA…PLFL), 57-77 (ANVQ…LGYL), 86-106 (IIVA…LSPW), 107-127 (IGGA…IMSA), 156-176 (TAFM…QIPA), 178-198 (AGIA…AWLA), 243-263 (MVFV…LIKV), 274-294 (ILIG…RSFI), 302-321 (AVLL…GFII), 358-378 (LLGS…IFFV), and 380-400 (VGGF…TGVG).

It belongs to the major facilitator superfamily.

Its subcellular location is the magnetosome membrane. In terms of biological role, required for correct biomineralization of the magnetosome; probably transports some form of iron. Partially functionally redundant with MamZ. The polypeptide is Magnetosome protein MamH (mamH) (Paramagnetospirillum magneticum (strain ATCC 700264 / AMB-1) (Magnetospirillum magneticum)).